Consider the following 625-residue polypeptide: Putative xanthine/uracil permease C887.17 (625 aa).

10 consecutive transmembrane segments (helical) span residues 49 to 69 (AGLT…TILV), 107 to 127 (AAIS…PVGM), 154 to 174 (EALL…VIGL), 192 to 212 (AGIG…LGVI), 246 to 263 (MWVG…LMMY), 328 to 348 (FAIA…GTLY), 369 to 389 (VAYI…CSPV), 406 to 426 (GILG…APIF), 429 to 449 (IPVW…MKST), and 465 to 485 (ITIA…AGII). The disordered stretch occupies residues 595–625 (EAVGESESFSNRQQDFRTPYAGIDMDTDDRI).

Belongs to the nucleobase:cation symporter-2 (NCS2) (TC 2.A.40) family. Azg-like subfamily.

The protein localises to the golgi apparatus membrane. This chain is Putative xanthine/uracil permease C887.17, found in Schizosaccharomyces pombe (strain 972 / ATCC 24843) (Fission yeast).